Here is a 492-residue protein sequence, read N- to C-terminus: Cobyric acid synthase (492 aa).

The GATase cobBQ-type domain occupies 252 to 440; the sequence is QLNVVVPVLT…LHGIFEQTEA (189 aa). Cysteine 333 acts as the Nucleophile in catalysis. Residue histidine 432 is part of the active site.

Belongs to the CobB/CobQ family. CobQ subfamily.

It participates in cofactor biosynthesis; adenosylcobalamin biosynthesis. Its function is as follows. Catalyzes amidations at positions B, D, E, and G on adenosylcobyrinic A,C-diamide. NH(2) groups are provided by glutamine, and one molecule of ATP is hydrogenolyzed for each amidation. This Photobacterium profundum (strain SS9) protein is Cobyric acid synthase.